We begin with the raw amino-acid sequence, 443 residues long: Ribosomal protein uS12 methylthiotransferase RimO (443 aa).

The MTTase N-terminal domain occupies 9–119; sequence PKIGMVSLGC…VVSAVHDAAP (111 aa). Residues cysteine 18, cysteine 54, cysteine 83, cysteine 150, cysteine 154, and cysteine 157 each contribute to the [4Fe-4S] cluster site. The Radical SAM core domain maps to 136 to 373; the sequence is LTPRHYSYLK…MEKAAQISEA (238 aa). In terms of domain architecture, TRAM spans 376–443; sequence QAKIGRDIAT…EHDLFGVALS (68 aa).

This sequence belongs to the methylthiotransferase family. RimO subfamily. It depends on [4Fe-4S] cluster as a cofactor.

Its subcellular location is the cytoplasm. The catalysed reaction is L-aspartate(89)-[ribosomal protein uS12]-hydrogen + (sulfur carrier)-SH + AH2 + 2 S-adenosyl-L-methionine = 3-methylsulfanyl-L-aspartate(89)-[ribosomal protein uS12]-hydrogen + (sulfur carrier)-H + 5'-deoxyadenosine + L-methionine + A + S-adenosyl-L-homocysteine + 2 H(+). Functionally, catalyzes the methylthiolation of an aspartic acid residue of ribosomal protein uS12. This Zymomonas mobilis subsp. mobilis (strain ATCC 31821 / ZM4 / CP4) protein is Ribosomal protein uS12 methylthiotransferase RimO.